The chain runs to 96 residues: Co-chaperonin GroES (96 aa).

The protein belongs to the GroES chaperonin family. In terms of assembly, heptamer of 7 subunits arranged in a ring. Interacts with the chaperonin GroEL.

The protein localises to the cytoplasm. Together with the chaperonin GroEL, plays an essential role in assisting protein folding. The GroEL-GroES system forms a nano-cage that allows encapsulation of the non-native substrate proteins and provides a physical environment optimized to promote and accelerate protein folding. GroES binds to the apical surface of the GroEL ring, thereby capping the opening of the GroEL channel. The chain is Co-chaperonin GroES from Haemophilus influenzae (strain PittEE).